The chain runs to 213 residues: Urease accessory protein UreG (213 aa).

A GTP-binding site is contributed by 14 to 21 (GPVGSGKT).

Belongs to the SIMIBI class G3E GTPase family. UreG subfamily. Homodimer. UreD, UreF and UreG form a complex that acts as a GTP-hydrolysis-dependent molecular chaperone, activating the urease apoprotein by helping to assemble the nickel containing metallocenter of UreC. The UreE protein probably delivers the nickel.

The protein localises to the cytoplasm. Facilitates the functional incorporation of the urease nickel metallocenter. This process requires GTP hydrolysis, probably effectuated by UreG. In Mesorhizobium japonicum (strain LMG 29417 / CECT 9101 / MAFF 303099) (Mesorhizobium loti (strain MAFF 303099)), this protein is Urease accessory protein UreG.